The following is a 52-amino-acid chain: MRIKVGLKCEECGDINYSTYKNSKNTTEKLELKKYCPRLKKHTLHKEVKLKS.

It belongs to the bacterial ribosomal protein bL33 family.

The chain is Large ribosomal subunit protein bL33 from Campylobacter jejuni subsp. jejuni serotype O:6 (strain 81116 / NCTC 11828).